The chain runs to 331 residues: Meiotically up-regulated gene 172 protein (331 aa).

Residues 72-166 (IKNNEYEKQR…KGNYGLVKAR (95 aa)) adopt a coiled-coil conformation.

The protein belongs to the ADIP family.

It is found in the cytoplasm. In terms of biological role, has a role in meiosis. The polypeptide is Meiotically up-regulated gene 172 protein (mug172) (Schizosaccharomyces pombe (strain 972 / ATCC 24843) (Fission yeast)).